The chain runs to 231 residues: 5'-methylthioadenosine/S-adenosylhomocysteine nucleosidase (231 aa).

E12 functions as the Proton acceptor in the catalytic mechanism. Residues G78, V153, and M174–E175 contribute to the substrate site. D198 functions as the Proton donor in the catalytic mechanism.

It belongs to the PNP/UDP phosphorylase family. MtnN subfamily.

It carries out the reaction S-adenosyl-L-homocysteine + H2O = S-(5-deoxy-D-ribos-5-yl)-L-homocysteine + adenine. It catalyses the reaction S-methyl-5'-thioadenosine + H2O = 5-(methylsulfanyl)-D-ribose + adenine. The enzyme catalyses 5'-deoxyadenosine + H2O = 5-deoxy-D-ribose + adenine. It functions in the pathway amino-acid biosynthesis; L-methionine biosynthesis via salvage pathway; S-methyl-5-thio-alpha-D-ribose 1-phosphate from S-methyl-5'-thioadenosine (hydrolase route): step 1/2. In terms of biological role, catalyzes the irreversible cleavage of the glycosidic bond in both 5'-methylthioadenosine (MTA) and S-adenosylhomocysteine (SAH/AdoHcy) to adenine and the corresponding thioribose, 5'-methylthioribose and S-ribosylhomocysteine, respectively. Also cleaves 5'-deoxyadenosine, a toxic by-product of radical S-adenosylmethionine (SAM) enzymes, into 5-deoxyribose and adenine. This Vibrio parahaemolyticus serotype O3:K6 (strain RIMD 2210633) protein is 5'-methylthioadenosine/S-adenosylhomocysteine nucleosidase.